The sequence spans 457 residues: Bifunctional protein GlmU (457 aa).

The pyrophosphorylase stretch occupies residues 1-232 (MAKVAAIVLA…PMEVMGVNDR (232 aa)). Residues 9–12 (LAAG), K23, Q75, and 80–81 (GT) contribute to the UDP-N-acetyl-alpha-D-glucosamine site. D105 lines the Mg(2+) pocket. G142, E157, N172, and N230 together coordinate UDP-N-acetyl-alpha-D-glucosamine. N230 is a binding site for Mg(2+). Residues 233 to 253 (VQLAEAGRIIRVRINKALMVA) are linker. Residues 254 to 457 (GTTIIDPETT…NKEGWKLKNK (204 aa)) form an N-acetyltransferase region. UDP-N-acetyl-alpha-D-glucosamine is bound by residues R336 and K354. H366 serves as the catalytic Proton acceptor. UDP-N-acetyl-alpha-D-glucosamine is bound by residues Y369 and N380. Residues 389-390 (NY), S408, A426, and R443 each bind acetyl-CoA.

In the N-terminal section; belongs to the N-acetylglucosamine-1-phosphate uridyltransferase family. It in the C-terminal section; belongs to the transferase hexapeptide repeat family. As to quaternary structure, homotrimer. It depends on Mg(2+) as a cofactor.

Its subcellular location is the cytoplasm. It carries out the reaction alpha-D-glucosamine 1-phosphate + acetyl-CoA = N-acetyl-alpha-D-glucosamine 1-phosphate + CoA + H(+). The enzyme catalyses N-acetyl-alpha-D-glucosamine 1-phosphate + UTP + H(+) = UDP-N-acetyl-alpha-D-glucosamine + diphosphate. Its pathway is nucleotide-sugar biosynthesis; UDP-N-acetyl-alpha-D-glucosamine biosynthesis; N-acetyl-alpha-D-glucosamine 1-phosphate from alpha-D-glucosamine 6-phosphate (route II): step 2/2. It participates in nucleotide-sugar biosynthesis; UDP-N-acetyl-alpha-D-glucosamine biosynthesis; UDP-N-acetyl-alpha-D-glucosamine from N-acetyl-alpha-D-glucosamine 1-phosphate: step 1/1. It functions in the pathway bacterial outer membrane biogenesis; LPS lipid A biosynthesis. Functionally, catalyzes the last two sequential reactions in the de novo biosynthetic pathway for UDP-N-acetylglucosamine (UDP-GlcNAc). The C-terminal domain catalyzes the transfer of acetyl group from acetyl coenzyme A to glucosamine-1-phosphate (GlcN-1-P) to produce N-acetylglucosamine-1-phosphate (GlcNAc-1-P), which is converted into UDP-GlcNAc by the transfer of uridine 5-monophosphate (from uridine 5-triphosphate), a reaction catalyzed by the N-terminal domain. This is Bifunctional protein GlmU from Geotalea daltonii (strain DSM 22248 / JCM 15807 / FRC-32) (Geobacter daltonii).